The sequence spans 419 residues: Transcription termination factor Rho (419 aa).

The region spanning Gly-48–His-123 is the Rho RNA-BD domain. ATP-binding positions include Gly-169–Ala-174, Lys-181–Val-186, and Arg-212.

The protein belongs to the Rho family. In terms of assembly, homohexamer. The homohexamer assembles into an open ring structure.

Functionally, facilitates transcription termination by a mechanism that involves Rho binding to the nascent RNA, activation of Rho's RNA-dependent ATPase activity, and release of the mRNA from the DNA template. The polypeptide is Transcription termination factor Rho (Neisseria gonorrhoeae).